We begin with the raw amino-acid sequence, 122 residues long: Large ribosomal subunit protein uL14 (122 aa).

It belongs to the universal ribosomal protein uL14 family. Part of the 50S ribosomal subunit. Forms a cluster with proteins L3 and L19. In the 70S ribosome, L14 and L19 interact and together make contacts with the 16S rRNA in bridges B5 and B8.

In terms of biological role, binds to 23S rRNA. Forms part of two intersubunit bridges in the 70S ribosome. This is Large ribosomal subunit protein uL14 from Prosthecochloris aestuarii (strain DSM 271 / SK 413).